The chain runs to 445 residues: F-box protein At5g10340 (445 aa).

Residues 64-112 (SMEELLPHDVIEYHIMVRLDVKTLLKFKSVSKQWMSTIQSPSFQERQLI) enclose the F-box domain.

The sequence is that of F-box protein At5g10340 from Arabidopsis thaliana (Mouse-ear cress).